The sequence spans 483 residues: AP-3 complex subunit mu (483 aa).

Positions 211–482 constitute an MHD domain; the sequence is NNELYVDLLE…KTQTGNFQVR (272 aa).

The protein belongs to the adaptor complexes medium subunit family. In terms of assembly, adaptor protein complex 3 (AP-3) is a heterotetramer composed of 2 large adaptins (APL5 and APL6), a medium adaptin (APM3) and a small adaptin (APS3).

It is found in the golgi apparatus. It localises to the cytoplasmic vesicle membrane. Functionally, part of the AP-3 complex, an adaptor-related complex which is not clathrin-associated. The complex is associated with the Golgi region as well as more peripheral structures. It facilitates the budding of vesicles from the Golgi membrane and may be directly involved in trafficking to the vacuole. Required for the transport via the ALP pathway, which directs the transport of the cargo proteins PHO8 and VAM3 to the vacuole. This Saccharomyces cerevisiae (strain ATCC 204508 / S288c) (Baker's yeast) protein is AP-3 complex subunit mu (APM3).